The chain runs to 475 residues: MNNLFFSKILRSDNIHFVGIGGVGMGALAEICIKLGYKISGSDIKENLITKKLSVLGAKIYNQHCANNIIESTIIVVSSAIKEDNLEIIYAKKLNIPVVKRAEFLSELMRFKYGIIVSGTHGKTTTTSIISYIYKEAKLFPTYLYGGRLNNSDDYGNLGNSKYWISEADESDNSFLFFRPIISVVTNIEKDHLESYQGNFKKLKESFIKFLHNIPFYGYSVLCLDDIEIKKIIPLINKKIVTYGFNRNSDFCITKFFQSNKKIIFIVYIKHQKRYLKFVSNLLGKHNALNITAAITIAIKEGIKYNIILNSIKKFPGINRRFDFINKYDLSNLNNKKGTITIVDDYGHHPTELKLTIKSVKKIWNKRRLIMIFQPHKYTRTKYLYNYFVKVLSTVDILLIMEIYSAGENPIYKINSKNLCQSIMALKRSHVIFIPNEKFLFKKLELLLKNNDILLLQGAGTIENIFKKLTSKLLL.

Position 119–125 (119–125 (GTHGKTT)) interacts with ATP.

This sequence belongs to the MurCDEF family.

It is found in the cytoplasm. The catalysed reaction is UDP-N-acetyl-alpha-D-muramate + L-alanine + ATP = UDP-N-acetyl-alpha-D-muramoyl-L-alanine + ADP + phosphate + H(+). It functions in the pathway cell wall biogenesis; peptidoglycan biosynthesis. Cell wall formation. The sequence is that of UDP-N-acetylmuramate--L-alanine ligase from Wigglesworthia glossinidia brevipalpis.